A 245-amino-acid polypeptide reads, in one-letter code: 1-(5-phosphoribosyl)-5-[(5-phosphoribosylamino)methylideneamino] imidazole-4-carboxamide isomerase (245 aa).

Asp7 acts as the Proton acceptor in catalysis. Asp129 (proton donor) is an active-site residue.

The protein belongs to the HisA/HisF family.

It localises to the cytoplasm. The enzyme catalyses 1-(5-phospho-beta-D-ribosyl)-5-[(5-phospho-beta-D-ribosylamino)methylideneamino]imidazole-4-carboxamide = 5-[(5-phospho-1-deoxy-D-ribulos-1-ylimino)methylamino]-1-(5-phospho-beta-D-ribosyl)imidazole-4-carboxamide. The protein operates within amino-acid biosynthesis; L-histidine biosynthesis; L-histidine from 5-phospho-alpha-D-ribose 1-diphosphate: step 4/9. The chain is 1-(5-phosphoribosyl)-5-[(5-phosphoribosylamino)methylideneamino] imidazole-4-carboxamide isomerase from Idiomarina loihiensis (strain ATCC BAA-735 / DSM 15497 / L2-TR).